Consider the following 1222-residue polypeptide: ATP-dependent helicase/nuclease subunit A (1222 aa).

Positions 39–495 (QKRTAQQIEA…ILLKENFRSQ (457 aa)) constitute a UvrD-like helicase ATP-binding domain. Residue 60–67 (ASAGSGKT) participates in ATP binding. Residues 524–810 (QLIAGSHAQT…NLMTIHKSKG (287 aa)) form the UvrD-like helicase C-terminal domain.

It belongs to the helicase family. AddA subfamily. As to quaternary structure, heterodimer of AddA and AddB/RexB. The cofactor is Mg(2+).

The enzyme catalyses Couples ATP hydrolysis with the unwinding of duplex DNA by translocating in the 3'-5' direction.. It catalyses the reaction ATP + H2O = ADP + phosphate + H(+). The heterodimer acts as both an ATP-dependent DNA helicase and an ATP-dependent, dual-direction single-stranded exonuclease. Recognizes the chi site generating a DNA molecule suitable for the initiation of homologous recombination. The AddA nuclease domain is required for chi fragment generation; this subunit has the helicase and 3' -&gt; 5' nuclease activities. This Streptococcus pyogenes serotype M28 (strain MGAS6180) protein is ATP-dependent helicase/nuclease subunit A.